The sequence spans 835 residues: Serine/threonine-protein kinase TNNI3K (835 aa).

Positions 21 to 51 (SESYVITIERLEDDLQIKEKELTELRNIFGS) form a coiled coil. ANK repeat units follow at residues 66–96 (NGLSLLHLCCICGGKKSHIRTLMLKGLRPSR), 100–129 (NGFTALHLAVYKDNAELITSLLHSGADIQQ), 133–162 (GGLTALHIATIAGHLEAADVLLQHGANVNI), 166–195 (VFFTPLHIAAYYGHEQVTRLLLKFGADVNV), 199–228 (VGDRPLHLASAKGFLNIAKLLMEEGSKADV), 234–263 (EDHVPLHFCSRFGHHDIVKYLLQSDLEVQP), 269–298 (YGDTPLHLACYNGKFEVAKEIIQISGTESL), 304–335 (FSETAFHSACTYGKSIDLVKFLLDQNVININH), 339–368 (DGHTGLHSACYHGHIRLVQFLLDNGADMNL), and 381–410 (DEQTCLMWAYEKGHDAIVTLLKHYKRPQDE). Positions 463–723 (IEFHEIIGSG…EVVMKLEECL (261 aa)) constitute a Protein kinase domain. Residues 469-477 (IGSGSFGKV) and Lys490 each bind ATP. The active-site Proton acceptor is Asp588. The span at 732-746 (ASSNSSGSLSPSSSS) shows a compositional bias: low complexity. Residues 732–751 (ASSNSSGSLSPSSSSDCLVN) form a disordered region.

Belongs to the protein kinase superfamily. TKL Ser/Thr protein kinase family. MAP kinase kinase kinase subfamily. Interacts with TNNI3, ACTC1, ACTA1, MYBPC3, AIP, FABP3 and HADHB. Mg(2+) serves as cofactor. Autophosphorylated. As to expression, highly expressed in both adult and fetal heart.

It localises to the nucleus. The protein localises to the cytoplasm. The catalysed reaction is L-seryl-[protein] + ATP = O-phospho-L-seryl-[protein] + ADP + H(+). The enzyme catalyses L-threonyl-[protein] + ATP = O-phospho-L-threonyl-[protein] + ADP + H(+). May play a role in cardiac physiology. The sequence is that of Serine/threonine-protein kinase TNNI3K from Homo sapiens (Human).